We begin with the raw amino-acid sequence, 1073 residues long: Ubiquitin carboxyl-terminal hydrolase 53 (1073 aa).

The region spanning lysine 30–proline 351 is the USP domain. The active-site Nucleophile is cysteine 41. The Zn(2+) site is built by histidine 66, cysteine 68, cysteine 73, cysteine 76, histidine 132, cysteine 144, cysteine 149, histidine 152, cysteine 165, cysteine 168, cysteine 224, and cysteine 228. Catalysis depends on histidine 301, which acts as the Proton acceptor. 2 disordered regions span residues leucine 391–glutamine 437 and leucine 485–lysine 636. Residues lysine 407 to arginine 418 show a composition bias toward polar residues. A compositionally biased stretch (low complexity) spans glutamine 524–alanine 541. Residues aspartate 553–serine 563 are compositionally biased toward polar residues. A compositionally biased stretch (low complexity) spans asparagine 612–asparagine 627.

This sequence belongs to the peptidase C19 family. As to quaternary structure, interacts (via the C-terminal region) with the heterodimer TJP1:TJP2. Expressed predominantly in skeletal muscle and heart.

The protein resides in the cell junction. It is found in the tight junction. The enzyme catalyses Thiol-dependent hydrolysis of ester, thioester, amide, peptide and isopeptide bonds formed by the C-terminal Gly of ubiquitin (a 76-residue protein attached to proteins as an intracellular targeting signal).. Functionally, deubiquitinase that mediates 'Lys-63'-linked deubiquitination of tight junction proteins, such as MARVELD2 and LSR, and which is involved in the survival of auditory hair cells and hearing. Specifically cleaves 'Lys-63'-linked polyubiquitin chains composed of at least 3 ubiquitin molecules, while it is not able to deubiquitinate substrates with shorter ubiquitin chains: recognizes ubiquitin chain in position S2 and catalyzes en bloc cleavage of polyubiquitin chains from substrate proteins. Probably acts by modulating the barrier properties and mechanical stability of tight junctions via deubiquitination of MARVELD2 and LSR. The sequence is that of Ubiquitin carboxyl-terminal hydrolase 53 from Homo sapiens (Human).